A 125-amino-acid chain; its full sequence is Calcitonin receptor-stimulating peptide 2 (125 aa).

An N-terminal signal peptide occupies residues 1 to 25; sequence MGFWKFLPFLVLSFLVVYQAGMFQA. Residues 26–77 constitute a propeptide that is removed on maturation; the sequence is APFRSALENDFDPAILTEKEMCLLLAAVMNDYVQMKTSELKQEAEHFHITAQ. Cys81 and Cys86 are disulfide-bonded.

This sequence belongs to the calcitonin family.

It is found in the secreted. This Capra hircus (Goat) protein is Calcitonin receptor-stimulating peptide 2 (CRSP2).